Reading from the N-terminus, the 586-residue chain is Phosphomethylpyrimidine synthase (586 aa).

Residues 1–33 (MKQSVSAEQIELKSSLPGSKKVYVDGPREGMKV) are disordered. Positions 22-33 (VYVDGPREGMKV) are enriched in basic and acidic residues. Substrate-binding positions include N193, M222, Y251, H287, 307 to 309 (SRG), 348 to 351 (DGLR), and E387. Residue H391 participates in Zn(2+) binding. Residue Y414 coordinates substrate. H455 serves as a coordination point for Zn(2+). Residues C535, C538, and C543 each contribute to the [4Fe-4S] cluster site.

The protein belongs to the ThiC family. [4Fe-4S] cluster is required as a cofactor.

The enzyme catalyses 5-amino-1-(5-phospho-beta-D-ribosyl)imidazole + S-adenosyl-L-methionine = 4-amino-2-methyl-5-(phosphooxymethyl)pyrimidine + CO + 5'-deoxyadenosine + formate + L-methionine + 3 H(+). Its pathway is cofactor biosynthesis; thiamine diphosphate biosynthesis. Its function is as follows. Catalyzes the synthesis of the hydroxymethylpyrimidine phosphate (HMP-P) moiety of thiamine from aminoimidazole ribotide (AIR) in a radical S-adenosyl-L-methionine (SAM)-dependent reaction. This chain is Phosphomethylpyrimidine synthase, found in Bacillus cereus (strain G9842).